The sequence spans 1906 residues: DENN domain-containing protein 4C (1906 aa).

In terms of domain architecture, MABP spans 40–199; the sequence is KAPITDIAVI…NVFLCYKKSV (160 aa). The region spanning 191–363 is the uDENN domain; sequence VFLCYKKSVP…NIPFPSPQRP (173 aa). A cDENN domain is found at 384 to 520; sequence PLPLSGANFS…PCKSLLGTLR (137 aa). The 119-residue stretch at 522–640 folds into the dDENN domain; sequence LYQQLCSVHR…CSFVSDKDTG (119 aa). Residues Ser-702, Ser-736, and Ser-740 each carry the phosphoserine modification. The stretch at 818–852 is one PPR repeat; it reads DEVCYRVVMQLCGLWVNPVLAVRVLFEMKTARIKP. Residues 904-917 are compositionally biased toward polar residues; that stretch reads SQVFSISGGQSDQG. Disordered regions lie at residues 904-942 and 963-984; these read SQVF…PPEL and LQPT…SIVK. Residues 920 to 939 are compositionally biased toward basic and acidic residues; the sequence is SKDELVKEGADGHAPEEHTP. Thr-966 is subject to Phosphothreonine. Positions 966 to 975 are enriched in pro residues; the sequence is TPEPQSPTEP. A Phosphoserine modification is found at Ser-971. Thr-973 carries the post-translational modification Phosphothreonine. Phosphoserine is present on residues Ser-987, Ser-1000, Ser-1043, Ser-1058, Ser-1096, and Ser-1123. Positions 1154 to 1171 are enriched in polar residues; sequence NSLQSNSHSDQSRDTQAG. Positions 1154-1184 are disordered; sequence NSLQSNSHSDQSRDTQAGAQDPVNKRSSSYA. Residues Ser-1181, Ser-1221, Ser-1240, Ser-1248, and Ser-1274 each carry the phosphoserine modification. The disordered stretch occupies residues 1246-1317; that stretch reads SCSMELHGEG…PQSPYRAYKD (72 aa). Over residues 1281 to 1291 the composition is skewed to basic and acidic residues; that stretch reads PPARDSTETEK. Positions 1292–1302 are enriched in polar residues; it reads SSPAVSSSKTL. Residues Ser-1321, Ser-1333, and Ser-1342 each carry the phosphoserine modification. 3 disordered regions span residues 1410 to 1440, 1548 to 1577, and 1596 to 1628; these read SPNT…GDVG, STSG…SAEP, and ASYT…LSKR. Positions 1423–1437 are enriched in low complexity; the sequence is LTQSNTSLGSSSSSG. 2 stretches are compositionally biased toward polar residues: residues 1548 to 1564 and 1611 to 1628; these read STSG…SASE and GDVQ…LSKR. Residues Ser-1620, Ser-1624, Ser-1626, Ser-1637, and Ser-1796 each carry the phosphoserine modification.

In terms of processing, phosphorylated in response to insulin.

It localises to the cytoplasmic vesicle membrane. It is found in the cell membrane. Its subcellular location is the cytoplasm. The protein resides in the cytosol. In terms of biological role, guanine nucleotide exchange factor (GEF) activating RAB10. Promotes the exchange of GDP to GTP, converting inactive GDP-bound RAB10 into its active GTP-bound form. Thereby, stimulates SLC2A4/GLUT4 glucose transporter-enriched vesicles delivery to the plasma membrane in response to insulin. This is DENN domain-containing protein 4C (Dennd4c) from Mus musculus (Mouse).